A 471-amino-acid polypeptide reads, in one-letter code: MDILCEENTSLSSTTNSLMQLNDDTRLYSNDFNSGEANTSDAFNWTVDSENRTNLSCEGCLSPSCLSLLHLQEKNWSALLTAVVIILTIAGNILVIMAVSLEKKLQNATNYFLMSLAIADMLLGFLVMPVSMLTILYGYRWPLPSKLCAVWIYLDVLFSTASIMHLCAISLDRYVAIQNPIHHSRFNSRTKAFLKIIAVWTISVGISMPIPVFGLQDDSKVFKEGSCLLADDNFVLIGSFVSFFIPLTIMVITYFLTIKSLQKEATLCVSDLGTRAKLASFSFLPQSSLSSEKLFQRSIHREPGSYTGRRTMQSISNEQKACKVLGIVFSLFVVMWCPFFITNIMAVICKESCNEDVIGALLNVFVWIGYLSSAVNPLVYTLFNKTYRSAFSRYIQCQYKENKKPLQLILVNTIPALAYKSSQLQMGQKKNSKQDAKTTDNDCSMVALGKQHSEDASKDNSDGVNEKVSCV.

Residues 1-80 lie on the Extracellular side of the membrane; sequence MDILCEENTS…LQEKNWSALL (80 aa). Residue Asn-38 is glycosylated (N-linked (GlcNAc...) asparagine). The helical transmembrane segment at 81–97 threads the bilayer; the sequence is TAVVIILTIAGNILVIM. Residues 98 to 111 are Cytoplasmic-facing; sequence AVSLEKKLQNATNY. Residues 112–137 traverse the membrane as a helical segment; that stretch reads FLMSLAIADMLLGFLVMPVSMLTILY. Residues 138–146 lie on the Extracellular side of the membrane; sequence GYRWPLPSK. The helical transmembrane segment at 147–171 threads the bilayer; that stretch reads LCAVWIYLDVLFSTASIMHLCAISL. The cysteines at positions 148 and 227 are disulfide-linked. Serotonin is bound at residue Asp-155. A DRY motif; important for ligand-induced conformation changes motif is present at residues 172–174; the sequence is DRY. Topologically, residues 172 to 191 are cytoplasmic; that stretch reads DRYVAIQNPIHHSRFNSRTK. Residues 192–215 form a helical membrane-spanning segment; it reads AFLKIIAVWTISVGISMPIPVFGL. Topologically, residues 216 to 232 are extracellular; the sequence is QDDSKVFKEGSCLLADD. Residues 233–258 traverse the membrane as a helical segment; that stretch reads NFVLIGSFVSFFIPLTIMVITYFLTI. The Cytoplasmic segment spans residues 259–322; sequence KSLQKEATLC…QSISNEQKAC (64 aa). The residue at position 280 (Ser-280) is a Phosphoserine. The helical transmembrane segment at 323-348 threads the bilayer; that stretch reads KVLGIVFSLFVVMWCPFFITNIMAVI. Asn-343 contributes to the serotonin binding site. The cysteines at positions 349 and 353 are disulfide-linked. The Extracellular segment spans residues 349-356; sequence CKESCNED. Residues 357-382 traverse the membrane as a helical segment; the sequence is VIGALLNVFVWIGYLSSAVNPLVYTL. The short motif at 376–380 is the NPxxY motif; important for ligand-induced conformation changes and signaling element; that stretch reads NPLVY. At 383-471 the chain is on the cytoplasmic side; sequence FNKTYRSAFS…DGVNEKVSCV (89 aa). The tract at residues 450 to 471 is disordered; sequence KQHSEDASKDNSDGVNEKVSCV. A compositionally biased stretch (basic and acidic residues) spans 451–465; the sequence is QHSEDASKDNSDGVN. The PDZ-binding signature appears at 469–471; the sequence is SCV.

This sequence belongs to the G-protein coupled receptor 1 family. Interacts (via C-terminus) with MPDZ and PATJ. May interact (via C-terminus) with MPP3, PRDX6, DLG4, DLG1, CASK, APBA1 and MAGI2. Interacts with GRM2 and DRD2; this may affect signaling.

The protein localises to the cell membrane. The protein resides in the cell projection. Its subcellular location is the dendrite. It is found in the axon. It localises to the cytoplasmic vesicle. The protein localises to the membrane. The protein resides in the caveola. Its subcellular location is the presynapse. Its activity is regulated as follows. G-protein coupled receptor activity is regulated by lipids: oleamide increases HTR2A-mediated activity. Its function is as follows. G-protein coupled receptor for 5-hydroxytryptamine (serotonin). Also functions as a receptor for various drugs and psychoactive substances, including mescaline, psilocybin, 1-(2,5-dimethoxy-4-iodophenyl)-2-aminopropane (DOI) and lysergic acid diethylamide (LSD). Ligand binding causes a conformation change that triggers signaling via guanine nucleotide-binding proteins (G proteins) and modulates the activity of downstream effectors. HTR2A is coupled to G(q)/G(11) G alpha proteins and activates phospholipase C-beta, releasing diacylglycerol (DAG) and inositol 1,4,5-trisphosphate (IP3) second messengers that modulate the activity of phosphatidylinositol 3-kinase and promote the release of Ca(2+) ions from intracellular stores, respectively. Beta-arrestin family members inhibit signaling via G proteins and mediate activation of alternative signaling pathways. Affects neural activity, perception, cognition and mood. Plays a role in the regulation of behavior, including responses to anxiogenic situations and psychoactive substances. Plays a role in intestinal smooth muscle contraction, and may play a role in arterial vasoconstriction. This Pongo pygmaeus (Bornean orangutan) protein is 5-hydroxytryptamine receptor 2A (HTR2A).